A 132-amino-acid chain; its full sequence is Large-conductance mechanosensitive channel (132 aa).

2 consecutive transmembrane segments (helical) span residues 14–34 (VIDL…VSSL) and 67–87 (GNFI…FMFV).

The protein belongs to the MscL family. In terms of assembly, homopentamer.

It is found in the cell membrane. Functionally, channel that opens in response to stretch forces in the membrane lipid bilayer. May participate in the regulation of osmotic pressure changes within the cell. This chain is Large-conductance mechanosensitive channel, found in Bacillus cereus (strain AH820).